The primary structure comprises 361 residues: MSGTAGTSRILRVYLDGPHGVGKSTTAEALVARCEPRRPIRSMLQEPMAYWRSTFASDAITEIYDTQHRLDSNEITAAEAGAFMTSLQLHMGTPYALLEEAMRPHVGRELAEPDDNGPLPQRRDFVLVVDRHAVASMVCYPLARFMMGCVSLRSVASLISHLPPPLPGTNLVVASLDFREHAARLRARARPGERLDLTMMAAIRNAYAMLANTSRYLLSGGDWRRDWGSLPVFKPSAFVARAAKTAYTLPLRDEPGLADTLFAALKVPEFLDARGYPRAAHAWTLDILANRIRALRVYTLDLTGPPEACAAAFRRLCAGLVLTEGSHPGALCELKRAAAAYAREMSVVGSREPTTAEVESA.

17-24 serves as a coordination point for ATP; that stretch reads GPHGVGKS. Glutamate 46 serves as the catalytic Proton acceptor. Substrate is bound by residues tyrosine 64 and glutamine 88. Arginine 184 is an ATP binding site. Arginine 190 is a binding site for substrate.

Belongs to the herpesviridae thymidine kinase family. Homodimer.

It carries out the reaction thymidine + ATP = dTMP + ADP + H(+). In terms of biological role, catalyzes the transfer of the gamma-phospho group of ATP to thymidine to generate dTMP in the salvage pathway of pyrimidine synthesis. The dTMP serves as a substrate for DNA polymerase during viral DNA replication. Allows the virus to be reactivated and to grow in non-proliferative cells lacking a high concentration of phosphorylated nucleic acid precursors. In Saimiriine herpesvirus 1 (strain MV-5-4-PSL) (SaHV-1), this protein is Thymidine kinase.